A 493-amino-acid chain; its full sequence is Cytochrome P450 2E1 (493 aa).

A substrate-binding site is contributed by 298-303 (FAGTET). C437 contributes to the heme binding site.

This sequence belongs to the cytochrome P450 family. As to quaternary structure, interacts with chaperones HSP70 and HSP90; this interaction is required for initial targeting to mitochondria. The cofactor is heme. In terms of tissue distribution, highest level in the liver and to a lesser extent in the kidney, with a higher level in the male kidney than in the female.

The protein localises to the endoplasmic reticulum membrane. It localises to the microsome membrane. Its subcellular location is the mitochondrion inner membrane. It catalyses the reaction an organic molecule + reduced [NADPH--hemoprotein reductase] + O2 = an alcohol + oxidized [NADPH--hemoprotein reductase] + H2O + H(+). It carries out the reaction (5Z,8Z,11Z)-eicosatrienoate + reduced [NADPH--hemoprotein reductase] + O2 = 19-hydroxy-(5Z,8Z,11Z)-eicosatrienoate + oxidized [NADPH--hemoprotein reductase] + H2O + H(+). The enzyme catalyses (5Z,8Z,11Z,14Z,17Z)-eicosapentaenoate + reduced [NADPH--hemoprotein reductase] + O2 = 19-hydroxy-(5Z,8Z,11Z,14Z,17Z)-eicosapentaenoate + oxidized [NADPH--hemoprotein reductase] + H2O + H(+). The catalysed reaction is (4Z,7Z,10Z,13Z,16Z,19Z)-docosahexaenoate + reduced [NADPH--hemoprotein reductase] + O2 = 21-hydroxy-(4Z,7Z,10Z,13Z,16Z,19Z)-docosahexaenoate + oxidized [NADPH--hemoprotein reductase] + H2O + H(+). It catalyses the reaction dodecanoate + reduced [NADPH--hemoprotein reductase] + O2 = 11-hydroxydodecanoate + oxidized [NADPH--hemoprotein reductase] + H2O + H(+). It carries out the reaction tetradecanoate + reduced [NADPH--hemoprotein reductase] + O2 = 13-hydroxytetradecanoate + oxidized [NADPH--hemoprotein reductase] + H2O + H(+). The enzyme catalyses 4-nitrophenol + NADPH + O2 + H(+) = 4-nitrocatechol + NADP(+) + H2O. It functions in the pathway lipid metabolism; fatty acid metabolism. Its activity is regulated as follows. The omega-1 hydroxylase activity is stimulated by cytochrome b5. In terms of biological role, a cytochrome P450 monooxygenase involved in the metabolism of fatty acids. Mechanistically, uses molecular oxygen inserting one oxygen atom into a substrate, and reducing the second into a water molecule, with two electrons provided by NADPH via cytochrome P450 reductase (NADPH--hemoprotein reductase). Catalyzes the hydroxylation of carbon-hydrogen bonds. Hydroxylates fatty acids specifically at the omega-1 position displaying the highest catalytic activity for saturated fatty acids. May be involved in the oxidative metabolism of xenobiotics. The protein is Cytochrome P450 2E1 (Cyp2e1) of Mus musculus (Mouse).